Reading from the N-terminus, the 111-residue chain is Cornifelin (111 aa).

It belongs to the cornifelin family. Directly or indirectly cross-linked to CE proteins loricin and involucrin (IVL).

The protein resides in the cytoplasm. In terms of biological role, part of the insoluble cornified cell envelope (CE) of stratified squamous epithelia. The sequence is that of Cornifelin (CNFN) from Bos taurus (Bovine).